The chain runs to 471 residues: MTDLPASVRWQLWIVAFGFFMQSLDTTIVNTALPSMAKSLGESPLHMHMIIVSYVLTVAVMLPASGWLADRVGVRNIFFTAIVLFTAGSLFCAQASTLDQLVMARVLQGIGGAMMVPVGRLTVMKIVPRDQYMAAMTFVTLPGQVGPLLGPALGGVLVEYASWHWIFLINIPVGIVGAIATLCLMPNYTLQTRRFDLSGFLLLAAGMATLTLALDGQKGLGISSRWLAGLVAVGLAALLLYLWHARGNARALFSLNLFRNRTFSLGLGGSFAGRIGSGMLPFMTPVFLQIGLGFSPFHAGLMMIPMVLGSMGMKRIVVQVVNRFGYRRVLVASTLGLAAVSLLFMFSALAGWYYALPLVLFLQGMINSSRFSSMNTLTLKDLPDDLASSGNSLLSMVMQLSMSIGVTIAGLLLGLYGQQHMSLDAASTHQVFLYTYLSMAAIIALPALIFSRVPDDVGTNTVIRRRNRSGS.

The next 13 membrane-spanning stretches (helical) occupy residues 12–32 (LWIVAFGFFMQSLDTTIVNTA), 49–69 (MIIVSYVLTVAVMLPASGWLA), 77–97 (IFFTAIVLFTAGSLFCAQAST), 106–126 (VLQGIGGAMMVPVGRLTVMKI), 138–158 (FVTLPGQVGPLLGPALGGVLV), 165–185 (WIFLINIPVGIVGAIATLCLM), 195–215 (FDLSGFLLLAAGMATLTLALD), 220–240 (LGISSRWLAGLVAVGLAALLL), 263–283 (FSLGLGGSFAGRIGSGMLPFM), 286–306 (VFLQIGLGFSPFHAGLMMIPM), 342–362 (LLFMFSALAGWYYALPLVLFL), 393–413 (LLSMVMQLSMSIGVTIAGLLL), and 431–451 (VFLYTYLSMAAIIALPALIFS).

Belongs to the major facilitator superfamily. TCR/Tet family.

The protein localises to the cell inner membrane. The protein is Putative multidrug resistance protein MdtD of Klebsiella pneumoniae (strain 342).